The chain runs to 364 residues: MFSSSWQQVPKFVVQQVRTATKRAAGSRTSMKDSAGRRLGPKKYEGQATQVGEIIMRQRGTKFYPGENVGIGKDHTLFALEPGYVRYYLDPFHPGKKFIGVSLYKDVKLPLPHFEPRLRRFGKAIIEDEEKAIAEENALPRKIYLLKDELIKKQQEREIKREELKAEYSKIISDLKVELDQQELAFALPYLLRWRTCLKNGFNESDARFNSYYYLEQELKLKMRNQEKSKLDDKLTLLKQVSTKLNESLSFNNKLELTKYISPEEKNTLKTQLITDLKAIDIKDKNSKKQVLAKFTDAKNFLTLSEEVRLRRKFLKPVKPETELKKLEEPLKPSKKNLTTRRYNYEQNTIDVITRPKTDFLSKL.

Residues 1 to 19 (MFSSSWQQVPKFVVQQVRT) constitute a mitochondrion transit peptide.

The protein belongs to the bacterial ribosomal protein bL27 family.

Its subcellular location is the mitochondrion. Component of the large subunit of mitochondrial ribosome. The chain is Large ribosomal subunit protein bL27m (MRPL2) from Kluyveromyces lactis (strain ATCC 8585 / CBS 2359 / DSM 70799 / NBRC 1267 / NRRL Y-1140 / WM37) (Yeast).